The primary structure comprises 857 residues: Facilitated trehalose transporter Tret1-1 (857 aa).

2 disordered regions span residues methionine 1–lysine 27 and serine 92–serine 203. Topologically, residues methionine 1–tyrosine 392 are cytoplasmic. Basic and acidic residues predominate over residues glutamate 134–glutamine 143. Over residues glycine 171–alanine 181 the composition is skewed to polar residues. Phosphoserine occurs at positions 248, 249, 250, 320, and 322. The disordered stretch occupies residues leucine 327 to serine 346. The segment covering arginine 330 to threonine 341 has biased composition (polar residues). A helical transmembrane segment spans residues isoleucine 393–valine 413. At serine 414 to serine 440 the chain is on the extracellular side. N-linked (GlcNAc...) asparagine glycosylation occurs at asparagine 428. Residues tryptophan 441–isoleucine 461 form a helical membrane-spanning segment. At glutamate 462 to threonine 473 the chain is on the cytoplasmic side. A helical membrane pass occupies residues alanine 474–leucine 494. The Extracellular portion of the chain corresponds to cysteine 495 to arginine 497. Residues phenylalanine 498–threonine 518 traverse the membrane as a helical segment. Residues valine 519 to glycine 528 are Cytoplasmic-facing. The chain crosses the membrane as a helical span at residues leucine 529–methionine 549. The N-linked (GlcNAc...) asparagine glycan is linked to asparagine 550. Residues asparagine 550–serine 552 lie on the Extracellular side of the membrane. The chain crosses the membrane as a helical span at residues methionine 553 to proline 573. The Cytoplasmic segment spans residues glutamate 574–proline 636. Residues leucine 637 to phenylalanine 657 form a helical membrane-spanning segment. The Extracellular portion of the chain corresponds to tyrosine 658–asparagine 673. The helical transmembrane segment at leucine 674 to isoleucine 694 threads the bilayer. At aspartate 695 to lysine 700 the chain is on the cytoplasmic side. A helical transmembrane segment spans residues isoleucine 701–phenylalanine 721. Topologically, residues tyrosine 722–cysteine 740 are extracellular. The helical transmembrane segment at phenylalanine 741–glycine 761 threads the bilayer. The Cytoplasmic portion of the chain corresponds to glutamate 762–lysine 767. A helical membrane pass occupies residues isoleucine 768–threonine 788. Residues lysine 789–histidine 801 are Extracellular-facing. A helical membrane pass occupies residues glycine 802–valine 822. The Cytoplasmic segment spans residues proline 823 to methionine 857. Phosphoserine is present on residues serine 845 and serine 846.

This sequence belongs to the major facilitator superfamily. Sugar transporter (TC 2.A.1.1) family. Trehalose transporter subfamily.

It localises to the cell membrane. Its function is as follows. Low-capacity facilitative transporter for trehalose. Does not transport maltose, sucrose or lactose. Mediates the bidirectional transfer of trehalose. Responsible for the transport of trehalose synthesized in the fat body and the incorporation of trehalose into other tissues that require a carbon source, thereby regulating trehalose levels in the hemolymph. The polypeptide is Facilitated trehalose transporter Tret1-1 (Drosophila sechellia (Fruit fly)).